The chain runs to 1358 residues: DNA-directed RNA polymerase subunit beta (1358 aa).

The protein belongs to the RNA polymerase beta chain family. The RNAP catalytic core consists of 2 alpha, 1 beta, 1 beta' and 1 omega subunit. When a sigma factor is associated with the core the holoenzyme is formed, which can initiate transcription.

The catalysed reaction is RNA(n) + a ribonucleoside 5'-triphosphate = RNA(n+1) + diphosphate. Its function is as follows. DNA-dependent RNA polymerase catalyzes the transcription of DNA into RNA using the four ribonucleoside triphosphates as substrates. The sequence is that of DNA-directed RNA polymerase subunit beta from Methylococcus capsulatus (strain ATCC 33009 / NCIMB 11132 / Bath).